Reading from the N-terminus, the 276-residue chain is MSASVIKSWADAEDEIPTPEITTNPDGTKTVVSYRLNANGQKVKITQKIKEVKVKEKVHPLIAQRKNWAKYGKEKNTPPGPDTRTTQLGEKVELKLGTSWKEIEKQEEESKEEQKAQLVSTQRIKCRTCGGDHFTSKCPFKDTLISDSTDASNAATPEPADDGMNAPGKYVPRHLRKDANGNMPAKDLKDRDDSTTLKISQLNSIVDEDMLRNELLGRYGPFQRAIVVRNRETGESRGFAYVTFATESKAEEALNDLNGKGYHSLILHLEWSKKRK.

At S148 the chain carries Phosphoserine. Positions 195-274 (TTLKISQLNS…LILHLEWSKK (80 aa)) constitute an RRM domain.

The protein belongs to the eIF-3 subunit G family. As to quaternary structure, component of the eukaryotic translation initiation factor 3 (eIF-3) complex.

It is found in the cytoplasm. RNA-binding component of the eukaryotic translation initiation factor 3 (eIF-3) complex, which is involved in protein synthesis of a specialized repertoire of mRNAs and, together with other initiation factors, stimulates binding of mRNA and methionyl-tRNAi to the 40S ribosome. The eIF-3 complex specifically targets and initiates translation of a subset of mRNAs involved in cell proliferation. This subunit can bind 18S rRNA. The chain is Eukaryotic translation initiation factor 3 subunit G from Debaryomyces hansenii (strain ATCC 36239 / CBS 767 / BCRC 21394 / JCM 1990 / NBRC 0083 / IGC 2968) (Yeast).